The chain runs to 74 residues: Protein SlyX homolog (74 aa).

The protein belongs to the SlyX family.

The chain is Protein SlyX homolog from Neisseria meningitidis serogroup A / serotype 4A (strain DSM 15465 / Z2491).